A 345-amino-acid polypeptide reads, in one-letter code: Selenide, water dikinase (345 aa).

Residue C16 is part of the active site. ATP-binding positions include K19 and 46–48; that span reads TSD. D49 contributes to the Mg(2+) binding site. ATP contacts are provided by residues D66, D89, and 136 to 138; that span reads GHT. D89 serves as a coordination point for Mg(2+). D224 provides a ligand contact to Mg(2+).

Belongs to the selenophosphate synthase 1 family. Class I subfamily. Homodimer. Requires Mg(2+) as cofactor.

It catalyses the reaction hydrogenselenide + ATP + H2O = selenophosphate + AMP + phosphate + 2 H(+). Its function is as follows. Synthesizes selenophosphate from selenide and ATP. This is Selenide, water dikinase from Clostridium botulinum (strain Eklund 17B / Type B).